The sequence spans 59 residues: Large ribosomal subunit protein uL30 (59 aa).

Belongs to the universal ribosomal protein uL30 family. Part of the 50S ribosomal subunit.

In Clostridium botulinum (strain 657 / Type Ba4), this protein is Large ribosomal subunit protein uL30.